Reading from the N-terminus, the 194-residue chain is Fe/S biogenesis protein NfuA (194 aa).

Cysteine 152 and cysteine 155 together coordinate [4Fe-4S] cluster.

It belongs to the NfuA family. As to quaternary structure, homodimer. [4Fe-4S] cluster serves as cofactor.

In terms of biological role, involved in iron-sulfur cluster biogenesis. Binds a 4Fe-4S cluster, can transfer this cluster to apoproteins, and thereby intervenes in the maturation of Fe/S proteins. Could also act as a scaffold/chaperone for damaged Fe/S proteins. This is Fe/S biogenesis protein NfuA from Pseudomonas putida (strain GB-1).